A 188-amino-acid polypeptide reads, in one-letter code: Protein GrpE (188 aa).

The tract at residues 1 to 22 (MADEQTLDTQNLDANQAPEASG) is disordered.

This sequence belongs to the GrpE family. In terms of assembly, homodimer.

It is found in the cytoplasm. Functionally, participates actively in the response to hyperosmotic and heat shock by preventing the aggregation of stress-denatured proteins, in association with DnaK and GrpE. It is the nucleotide exchange factor for DnaK and may function as a thermosensor. Unfolded proteins bind initially to DnaJ; upon interaction with the DnaJ-bound protein, DnaK hydrolyzes its bound ATP, resulting in the formation of a stable complex. GrpE releases ADP from DnaK; ATP binding to DnaK triggers the release of the substrate protein, thus completing the reaction cycle. Several rounds of ATP-dependent interactions between DnaJ, DnaK and GrpE are required for fully efficient folding. This Pseudomonas fluorescens (strain ATCC BAA-477 / NRRL B-23932 / Pf-5) protein is Protein GrpE.